The chain runs to 451 residues: Sensor histidine kinase CssS (451 aa).

Residues 1–9 (MKNKPLAFQ) lie on the Cytoplasmic side of the membrane. The chain crosses the membrane as a helical span at residues 10–30 (IWVVISGILLAISILLLVLFS). Residues 31–165 (NTLRDFFTNE…RDDLAYTLFK (135 aa)) are Extracellular-facing. A helical transmembrane segment spans residues 166 to 186 (QLLFIIAVVILLSWIPAIWLA). The region spanning 187–239 (KYLSRPLVSFEKHVKRISEQDWDDPVKVDRKDEIGKLGHTIEEMRQKLVQKDE) is the HAMP domain. At 187–451 (KYLSRPLVSF…GVTYRIAVPK (265 aa)) the chain is on the cytoplasmic side. The 205-residue stretch at 247-451 (NISHDLKTPV…GVTYRIAVPK (205 aa)) folds into the Histidine kinase domain. Phosphohistidine; by autocatalysis is present on histidine 250.

The protein localises to the cell membrane. The enzyme catalyses ATP + protein L-histidine = ADP + protein N-phospho-L-histidine.. In terms of biological role, member of the two-component regulatory system CssS/CssR required to control the cellular response to secretion stress. Required for the transcription of htrA. Could detect misfolded proteins at the membrane-cell wall interface and then activate CssR by phosphorylation. The sequence is that of Sensor histidine kinase CssS (cssS) from Bacillus subtilis (strain 168).